A 72-amino-acid polypeptide reads, in one-letter code: UPF0270 protein YheU (72 aa).

The protein belongs to the UPF0270 family.

This Salmonella arizonae (strain ATCC BAA-731 / CDC346-86 / RSK2980) protein is UPF0270 protein YheU.